A 267-amino-acid polypeptide reads, in one-letter code: Transmembrane protein 106B (267 aa).

Residues 1-92 lie on the Cytoplasmic side of the membrane; the sequence is MGKALSHVAK…QRLRPRRTKL (92 aa). A helical membrane pass occupies residues 93-113; it reads YVMASVILCLLLCTLAVFFLF. Over 114–267 the chain is Lumenal; it reads PRSIDVNYVG…EYSLNTPLTG (154 aa). N-linked (GlcNAc...) asparagine glycosylation is found at asparagine 141, asparagine 147, asparagine 160, and asparagine 179. An intrachain disulfide couples cysteine 210 to cysteine 249. A glycan (N-linked (GlcNAc...) asparagine) is linked at asparagine 252.

Belongs to the TMEM106 family.

Its subcellular location is the late endosome membrane. The protein localises to the lysosome membrane. The protein resides in the cell membrane. Its function is as follows. In neurons, involved in the transport of late endosomes/lysosomes. May be involved in dendrite morphogenesis and maintenance by regulating lysosomal trafficking. May act as a molecular brake for retrograde transport of late endosomes/lysosomes, possibly via its interaction with MAP6. In motoneurons, may mediate the axonal transport of lysosomes and axonal sorting at the initial segment. It remains unclear whether TMEM106B affects the transport of moving lysosomes in the anterograde or retrograde direction in neurites and whether it is particularly important in the sorting of lysosomes in axons or in dendrites. In neurons, may also play a role in the regulation of lysosomal size and responsiveness to stress. Required for proper lysosomal acidification. This is Transmembrane protein 106B (tmem106b) from Danio rerio (Zebrafish).